Here is a 263-residue protein sequence, read N- to C-terminus: Acetylglutamate kinase (263 aa).

Substrate contacts are provided by residues 48–49, Arg-70, and Asn-162; that span reads GG.

Belongs to the acetylglutamate kinase family. ArgB subfamily.

Its subcellular location is the cytoplasm. It carries out the reaction N-acetyl-L-glutamate + ATP = N-acetyl-L-glutamyl 5-phosphate + ADP. Its pathway is amino-acid biosynthesis; L-arginine biosynthesis; N(2)-acetyl-L-ornithine from L-glutamate: step 2/4. Catalyzes the ATP-dependent phosphorylation of N-acetyl-L-glutamate. The polypeptide is Acetylglutamate kinase (Vibrio campbellii (strain ATCC BAA-1116)).